Consider the following 290-residue polypeptide: UPF0761 membrane protein YihY (290 aa).

6 consecutive transmembrane segments (helical) span residues 44-64, 104-124, 140-160, 183-203, 210-230, and 244-264; these read LLSLVPLIAVVFALFAAFPMF, VGACGLIVTALLLMYAIDSAL, FAVYWMILTLGPLLAGASLAI, ILPLLLSWISFWLLYSIVPTT, ALVGAFVAALLFEAGKKGFAL, and VLAVIPILFVWVYWTWCIVLL.

Belongs to the UPF0761 family.

The protein localises to the cell inner membrane. The chain is UPF0761 membrane protein YihY from Salmonella agona (strain SL483).